The primary structure comprises 748 residues: Chondroadherin-like protein (748 aa).

A signal peptide spans 1 to 29; that stretch reads MERPQSSIWVFMLLLFMVLLQSPAWHVAA. Residues 30-61 enclose the LRRNT 1 domain; it reads QRCPQTCVCDNSRRHVTCRHQNLTEVPNTIPE. N-linked (GlcNAc...) asparagine glycosylation is present at Asn-51. 9 LRR repeats span residues 85 to 107, 108 to 131, 132 to 155, 156 to 179, 181 to 203, 204 to 227, 229 to 252, 253 to 275, and 276 to 299; these read PHLT…AFRG, LGRL…ALDG, LGSL…TFGA, LGSL…AFQG, LRTR…ALAG, LPAL…ALSQ, RSLA…GLAL, PGLR…AFAH, and CPRL…QVPG. An LRRCT 1 domain is found at 309–357; that stretch reads NPLWCACHARPLLEWLVRARVRSDGACRGPRRLRGEALDTLRPSDLRCP. Positions 352–389 are disordered; it reads SDLRCPGDAAAGDGDGDEDEDRPAGPRAPPLRSPHGEA. The 35-residue stretch at 394–428 folds into the LRRNT 2 domain; that stretch reads PCPPACACVAETRHSTCDGRGLQAVPRGFPNDTQL. Cysteines 395 and 410 form a disulfide. 10 LRR repeats span residues 423 to 446, 448 to 470, 471 to 494, 496 to 518, 519 to 542, 544 to 566, 567 to 590, 591 to 614, 616 to 639, and 641 to 665; these read PNDT…AFPG, RHLV…ALAG, LDRL…ALEG, PNLG…ALRA, LPTL…DLAG, RALR…ALGP, AREL…ALEG, LPAL…AFQP, GRSL…AFSG, and GKGL…GLSG. Asn-625 carries an N-linked (GlcNAc...) asparagine glycan. Residues 674-722 enclose the LRRCT 2 domain; sequence NPFHCDCQLLPLHRWLTGLNLRVGATCATPPSVRGQKVKVAAPVFEACP. Intrachain disulfides connect Cys-678–Cys-721 and Cys-680–Cys-700. The disordered stretch occupies residues 728–748; sequence KAKRTPTSRGSARRTPSLSRH. Positions 734 to 748 are enriched in polar residues; sequence TSRGSARRTPSLSRH.

The protein belongs to the small leucine-rich proteoglycan (SLRP) family. SLRP class IV subfamily. In terms of assembly, associates with collagen and binds to collagen fibrils. In terms of tissue distribution, expressed in cartilage, including articular knee cartilage, where it localizes to the extracellular space in the area immediately surrounding the chondrocytes, not detected in any other tissues (at protein level).

The protein resides in the secreted. It localises to the extracellular space. It is found in the extracellular matrix. Its function is as follows. Potential negative modulator of chondrocyte differentiation. Inhibits collagen fibrillogenesis in vitro. May influence chondrocyte's differentiation by acting on its cellular collagenous microenvironment. The polypeptide is Chondroadherin-like protein (Chadl) (Mus musculus (Mouse)).